A 196-amino-acid chain; its full sequence is HTH-type transcriptional regulator EcpR (196 aa).

The HTH luxR-type domain occupies 138–196; the sequence is KDIKKDKITDREMEIIRMTAQGMLPKSIARIENCSVKTVYTHRRNAEAKLYSKIYKLVP. A DNA-binding region (H-T-H motif) is located at residues 162-181; the sequence is PKSIARIENCSVKTVYTHRR.

Belongs to the EcpR/MatA family.

It localises to the cytoplasm. Functionally, part of the ecpRABCDE operon, which encodes the E.coli common pilus (ECP). ECP is found in both commensal and pathogenic strains and plays a dual role in early-stage biofilm development and host cell recognition. Positively regulates the expression of the ecp operon. The protein is HTH-type transcriptional regulator EcpR (ecpR) of Escherichia coli O17:K52:H18 (strain UMN026 / ExPEC).